A 628-amino-acid polypeptide reads, in one-letter code: Alpha pinene synthase, chloroplastic (628 aa).

Residues 1–46 (MSLGCITPLASAMVGPKLVRPLIHHNPLFHHKPLNRPYLQTKIPLR) constitute a chloroplast transit peptide. Mg(2+) contacts are provided by aspartate 381, aspartate 385, and glutamate 532. A DDXXD motif motif is present at residues 381 to 385 (DDMYD).

The protein belongs to the terpene synthase family. Tpsa subfamily. Mg(2+) serves as cofactor. Requires Mn(2+) as cofactor.

The protein resides in the plastid. It localises to the chloroplast. It catalyses the reaction (2E)-geranyl diphosphate = alpha-pinene + diphosphate. The protein operates within secondary metabolite biosynthesis; terpenoid biosynthesis. Monoterpene synthase involved in the biosynthesis of volatile compounds. Mediates the conversion of (2E)-geranyl diphosphate (GPP) into alpha-pinene. This Chamaecyparis formosensis (Formosan cypress) protein is Alpha pinene synthase, chloroplastic.